Reading from the N-terminus, the 333-residue chain is 4-hydroxy-3-methylbut-2-enyl diphosphate reductase (333 aa).

Cysteine 20 serves as a coordination point for [4Fe-4S] cluster. Residues histidine 49 and histidine 85 each contribute to the (2E)-4-hydroxy-3-methylbut-2-enyl diphosphate site. Dimethylallyl diphosphate contacts are provided by histidine 49 and histidine 85. Residues histidine 49 and histidine 85 each contribute to the isopentenyl diphosphate site. Cysteine 107 lines the [4Fe-4S] cluster pocket. Histidine 135 is a (2E)-4-hydroxy-3-methylbut-2-enyl diphosphate binding site. Histidine 135 is a dimethylallyl diphosphate binding site. An isopentenyl diphosphate-binding site is contributed by histidine 135. The active-site Proton donor is glutamate 137. Threonine 176 contacts (2E)-4-hydroxy-3-methylbut-2-enyl diphosphate. [4Fe-4S] cluster is bound at residue cysteine 206. (2E)-4-hydroxy-3-methylbut-2-enyl diphosphate-binding residues include serine 234, serine 235, asparagine 236, and serine 279. Dimethylallyl diphosphate is bound by residues serine 234, serine 235, asparagine 236, and serine 279. Isopentenyl diphosphate contacts are provided by serine 234, serine 235, asparagine 236, and serine 279.

The protein belongs to the IspH family. Requires [4Fe-4S] cluster as cofactor.

The catalysed reaction is isopentenyl diphosphate + 2 oxidized [2Fe-2S]-[ferredoxin] + H2O = (2E)-4-hydroxy-3-methylbut-2-enyl diphosphate + 2 reduced [2Fe-2S]-[ferredoxin] + 2 H(+). It catalyses the reaction dimethylallyl diphosphate + 2 oxidized [2Fe-2S]-[ferredoxin] + H2O = (2E)-4-hydroxy-3-methylbut-2-enyl diphosphate + 2 reduced [2Fe-2S]-[ferredoxin] + 2 H(+). The protein operates within isoprenoid biosynthesis; dimethylallyl diphosphate biosynthesis; dimethylallyl diphosphate from (2E)-4-hydroxy-3-methylbutenyl diphosphate: step 1/1. Its pathway is isoprenoid biosynthesis; isopentenyl diphosphate biosynthesis via DXP pathway; isopentenyl diphosphate from 1-deoxy-D-xylulose 5-phosphate: step 6/6. Functionally, catalyzes the conversion of 1-hydroxy-2-methyl-2-(E)-butenyl 4-diphosphate (HMBPP) into a mixture of isopentenyl diphosphate (IPP) and dimethylallyl diphosphate (DMAPP). Acts in the terminal step of the DOXP/MEP pathway for isoprenoid precursor biosynthesis. This is 4-hydroxy-3-methylbut-2-enyl diphosphate reductase from Rhizobium johnstonii (strain DSM 114642 / LMG 32736 / 3841) (Rhizobium leguminosarum bv. viciae).